Reading from the N-terminus, the 183-residue chain is Ribonuclease H (183 aa).

One can recognise an RNase H type-1 domain in the interval 2–151 (SQARFIAFSD…VDQLAQAAAR (150 aa)). Mg(2+) is bound by residues Asp11, Glu57, Asp79, and Asp143.

The protein belongs to the RNase H family. Monomer. Requires Mg(2+) as cofactor.

It is found in the cytoplasm. The enzyme catalyses Endonucleolytic cleavage to 5'-phosphomonoester.. Endonuclease that specifically degrades the RNA of RNA-DNA hybrids. In Anaeromyxobacter dehalogenans (strain 2CP-C), this protein is Ribonuclease H.